Reading from the N-terminus, the 191-residue chain is Adenylate kinase (191 aa).

12 to 17 (GSGKTT) provides a ligand contact to ATP. The NMP stretch occupies residues 34–63 (STGDLLRAESAKKTERGLLIEKFTSQGELV). AMP contacts are provided by residues Thr35, Arg40, 61-63 (ELV), 88-91 (GYPR), and Gln95. Residues 130 to 136 (GRSRGAD) form an LID region. Arg131 serves as a coordination point for ATP. Residues Arg133 and Arg145 each contribute to the AMP site. Arg173 provides a ligand contact to ATP.

Belongs to the adenylate kinase family. As to quaternary structure, monomer.

Its subcellular location is the cytoplasm. The enzyme catalyses AMP + ATP = 2 ADP. It participates in purine metabolism; AMP biosynthesis via salvage pathway; AMP from ADP: step 1/1. Its function is as follows. Catalyzes the reversible transfer of the terminal phosphate group between ATP and AMP. Plays an important role in cellular energy homeostasis and in adenine nucleotide metabolism. In Helicobacter pylori (strain HPAG1), this protein is Adenylate kinase.